We begin with the raw amino-acid sequence, 826 residues long: Arsenite oxidase subunit AioA (826 aa).

[3Fe-4S] cluster is bound by residues Cys22, Cys25, and Cys29. Substrate-binding residues include His196, Glu204, Arg420, and His424.

Belongs to the prokaryotic molybdopterin-containing oxidoreductase family. In terms of assembly, heterodimer consisting of a large and a small subunit. [3Fe-4S] cluster serves as cofactor. Mo-bis(molybdopterin guanine dinucleotide) is required as a cofactor.

It catalyses the reaction 2 oxidized [azurin] + arsenite + H2O = 2 reduced [azurin] + arsenate + 3 H(+). Its function is as follows. Involved in the detoxification of arsenic. Oxidizes As(III)O3(3-) (arsenite) to the somewhat less toxic As(V)O4(3-) (arsenate). In Alcaligenes faecalis, this protein is Arsenite oxidase subunit AioA (aioA).